We begin with the raw amino-acid sequence, 202 residues long: Na(+)-translocating NADH-quinone reductase subunit E (202 aa).

A run of 6 helical transmembrane segments spans residues 11-31 (AVFI…FLAV), 39-59 (FGLG…NNLI), 81-101 (FLKF…LEMA), 114-134 (GIFL…AFMV), 144-164 (VVFG…LAAV), and 180-200 (LGIT…FSGV).

It belongs to the NqrDE/RnfAE family. Composed of six subunits; NqrA, NqrB, NqrC, NqrD, NqrE and NqrF.

The protein resides in the cell inner membrane. It catalyses the reaction a ubiquinone + n Na(+)(in) + NADH + H(+) = a ubiquinol + n Na(+)(out) + NAD(+). NQR complex catalyzes the reduction of ubiquinone-1 to ubiquinol by two successive reactions, coupled with the transport of Na(+) ions from the cytoplasm to the periplasm. NqrA to NqrE are probably involved in the second step, the conversion of ubisemiquinone to ubiquinol. This is Na(+)-translocating NADH-quinone reductase subunit E from Idiomarina loihiensis (strain ATCC BAA-735 / DSM 15497 / L2-TR).